Here is a 142-residue protein sequence, read N- to C-terminus: DNA-directed RNA polymerase II subunit RPB4 (142 aa).

This sequence belongs to the eukaryotic RPB4 RNA polymerase subunit family. In terms of assembly, component of the RNA polymerase II (Pol II) core complex consisting of 12 subunits: a ten-subunit catalytic core composed of POLR2A/RPB1, POLR2B/RPB2, POLR2C/RPB3, POLR2I/RPB9, POLR2J/RPB11, POLR2E/RPABC1, POLR2F/RPABC2, POLR2H/RPABC3, POLR2K/RPABC4 and POLR2L/RPABC5 and a mobile stalk composed of two subunits POLR2D/RPB4 and POLR2G/RPB7, protruding from the core and functioning primarily in transcription initiation. Part of Pol II(G) complex, in which Pol II core associates with an additional subunit POLR2M; unlike conventional Pol II, Pol II(G) functions as a transcriptional repressor. Part of TBP-based Pol II pre-initiation complex (PIC), in which Pol II core assembles with general transcription factors and other specific initiation factors including GTF2E1, GTF2E2, GTF2F1, GTF2F2, TCEA1, ERCC2, ERCC3, GTF2H2, GTF2H3, GTF2H4, GTF2H5, GTF2A1, GTF2A2, GTF2B and TBP; this large multi-subunit PIC complex mediates DNA unwinding and targets Pol II core to the transcription start site where the first phosphodiester bond forms.

Its subcellular location is the nucleus. Functionally, core component of RNA polymerase II (Pol II), a DNA-dependent RNA polymerase which synthesizes mRNA precursors and many functional non-coding RNAs using the four ribonucleoside triphosphates as substrates. Pol II is the central component of the basal RNA polymerase II transcription machinery. It is composed of mobile elements that move relative to each other. POLR2D/RPB4 is part of a subcomplex with POLR2G/RPB7 that binds to a pocket formed by POLR2A/RPB1, POLR2B/RPB2 and POLR2F/RPABC2 at the base of the clamp element. The POLR2D/RPB4-POLR2G/RPB7 subcomplex seems to lock the clamp via POLR2G/RPB7 in the closed conformation thus preventing double-stranded DNA to enter the active site cleft. The POLR2D/RPB4-POLR2G/RPB7 subcomplex binds single-stranded DNA and RNA. The protein is DNA-directed RNA polymerase II subunit RPB4 (POLR2D) of Homo sapiens (Human).